A 451-amino-acid chain; its full sequence is Prenyltransferase asqH1 (451 aa).

The disordered stretch occupies residues 14 to 37 (AEDQSTRKVHWGQEGSGQSPEARP). E120 contributes to the L-tryptophan binding site. Residues R137, R274, K276, Y278, and Y373 each coordinate substrate.

It belongs to the tryptophan dimethylallyltransferase family.

The catalysed reaction is quinolinone B + dimethylallyl diphosphate = peniprequinolone + diphosphate. It functions in the pathway secondary metabolite biosynthesis. Its pathway is alkaloid biosynthesis. The protein operates within mycotoxin biosynthesis. In terms of biological role, prenyltransferase; part of the gene cluster that mediates the biosynthesis of the aspoquinolone mycotoxins. Within the pathway, the prenyltransferase asqH1 catalyzes the canonical Friedel-Crafts alkylation of quinolinone B with dimethylallyl cation to yield dimethylallyl quinolone. The first step of the pathway is catalyzed by the nonribosomal peptide synthetase asqK that condenses anthranilic acid and O-methyl-L-tyrosine to produce 4'-methoxycyclopeptin. 4'-methoxycyclopeptin is then converted to 4'-methoxydehydrocyclopeptin by the ketoglutarate-dependent dioxygenase asqJ. AsqJ also converts its first product 4'-methoxydehydrocyclopeptin to 4'-methoxycyclopenin. The following conversion of 4'-methoxycyclopenin into 4'-methoxyviridicatin is catalyzed by the cyclopenase asqI. 4'-methoxyviridicatin is the precursor of quinolone natural products, and is further converted to quinolinone B. The prenyltransferase asqH1 then catalyzes the canonical Friedel-Crafts alkylation of quinolinone B with dimethylallyl cation to yield dimethylallyl quinolone, which is subjected to FAD-dependent dehydrogenation by the FAD-linked oxidoreductase asqF to yield conjugated aryl diene. The delta(3') double bond then serves as the site of the second alkylation with DMAPP catalyzed by the prenyltransferase asqH2 to yield a carbenium ion intermediate, which can be attacked by H(2)O to yield a styrenyl quinolone containing a C3'-hydroxyprenyl chain. The FAD-dependent monooxygenase asqG performs epoxidation of the terminal C7'-C8' olefin. Finally, after dehydratation of the epoxide at C3 by asqC, the quinolone epoxide rearrangement protein asqO catalyzes an enzymatic 3-exo-tet cyclization to yield the cyclopropyl-THF ring system in aspoquinolone. The sequence is that of Prenyltransferase asqH1 from Emericella nidulans (strain FGSC A4 / ATCC 38163 / CBS 112.46 / NRRL 194 / M139) (Aspergillus nidulans).